A 108-amino-acid polypeptide reads, in one-letter code: FK506-binding protein 1 (108 aa).

The 89-residue stretch at G20–N108 folds into the PPIase FKBP-type domain.

The protein belongs to the FKBP-type PPIase family. FKBP1 subfamily.

Its subcellular location is the cytoplasm. The enzyme catalyses [protein]-peptidylproline (omega=180) = [protein]-peptidylproline (omega=0). Inhibited by both FK506 and rapamycin. Its function is as follows. PPIases accelerate the folding of proteins. It catalyzes the cis-trans isomerization of proline imidic peptide bonds in oligopeptides. This chain is FK506-binding protein 1 (FRR1), found in Cryptococcus neoformans var. grubii serotype A (strain H99 / ATCC 208821 / CBS 10515 / FGSC 9487) (Filobasidiella neoformans var. grubii).